A 327-amino-acid chain; its full sequence is MERRNHSGRVSEFVLLGFPAPAPLRVLLFFLSLLAYVLVLTENMLIIIAIRNHPTLHKPMYFFLANMSFLEIWYVTVTIPKMLAGFIGSKENHGQLISFEACMTQLYFFLGLGCTECVLLAVMAYDRYVAICHPLHYPVIVSSRLCVQMAAGSWAGGFGISMVKVFLISRLSYCGPNTINHFFCDVSPLLNLSCTDMSTAELTDFVLAIFILLGPLSVTGASYMAITGAVMRIPSAAGRHKAFSTCASHLTVVIIFYAASIFIYARPKALSAFDTNKLVSVLYAVIVPLFNPIIYCLRNQDVKRALRRTLHLAQDQEANTNKGSKNG.

Residues 1 to 26 lie on the Extracellular side of the membrane; it reads MERRNHSGRVSEFVLLGFPAPAPLRV. Asn5 is a glycosylation site (N-linked (GlcNAc...) asparagine). A helical membrane pass occupies residues 27–50; that stretch reads LLFFLSLLAYVLVLTENMLIIIAI. The Cytoplasmic segment spans residues 51-58; the sequence is RNHPTLHK. A helical membrane pass occupies residues 59 to 80; the sequence is PMYFFLANMSFLEIWYVTVTIP. The Extracellular portion of the chain corresponds to 81–104; that stretch reads KMLAGFIGSKENHGQLISFEACMT. Cys102 and Cys194 form a disulfide bridge. Residues 105-125 form a helical membrane-spanning segment; sequence QLYFFLGLGCTECVLLAVMAY. The Cytoplasmic portion of the chain corresponds to 126 to 144; that stretch reads DRYVAICHPLHYPVIVSSR. The helical transmembrane segment at 145–163 threads the bilayer; sequence LCVQMAAGSWAGGFGISMV. At 164-201 the chain is on the extracellular side; it reads KVFLISRLSYCGPNTINHFFCDVSPLLNLSCTDMSTAE. Residues 202 to 224 form a helical membrane-spanning segment; it reads LTDFVLAIFILLGPLSVTGASYM. Topologically, residues 225–241 are cytoplasmic; sequence AITGAVMRIPSAAGRHK. A helical transmembrane segment spans residues 242–265; it reads AFSTCASHLTVVIIFYAASIFIYA. Residues 266–277 are Extracellular-facing; it reads RPKALSAFDTNK. A helical membrane pass occupies residues 278-297; the sequence is LVSVLYAVIVPLFNPIIYCL. The Cytoplasmic portion of the chain corresponds to 298–327; sequence RNQDVKRALRRTLHLAQDQEANTNKGSKNG.

Belongs to the G-protein coupled receptor 1 family. As to expression, olfactory epithelium.

It is found in the cell membrane. In terms of biological role, odorant receptor. This chain is Olfactory receptor 226 (Olr226), found in Rattus norvegicus (Rat).